Reading from the N-terminus, the 371-residue chain is Outer membrane protein P2 (371 aa).

A signal peptide spans 1-20 (MKKTLAALIVGAFAASAANA).

Belongs to the Gram-negative porin family. In terms of assembly, homotrimer.

Its subcellular location is the cell outer membrane. In terms of biological role, forms pores that allow passive diffusion of small molecules across the outer membrane. This Haemophilus influenzae protein is Outer membrane protein P2 (ompP2).